The following is a 332-amino-acid chain: UPF0194 membrane protein YbhG (332 aa).

A signal peptide spans 1–16; it reads MMKKPVVIGLAVVVLA. Positions 108–209 form a coiled coil; that stretch reads EEIAQAAAAV…LNLQDSTLIA (102 aa).

It belongs to the UPF0194 family.

Its subcellular location is the periplasm. The polypeptide is UPF0194 membrane protein YbhG (Escherichia coli O45:K1 (strain S88 / ExPEC)).